The primary structure comprises 283 residues: Probable replication-associated protein repA1 (283 aa).

It belongs to the IncFII RepA family.

Its function is as follows. This protein is essential for plasmid replication; it is involved in copy control functions. The polypeptide is Probable replication-associated protein repA1 (repA1) (Buchnera aphidicola subsp. Schizaphis graminum (strain Sg)).